The chain runs to 190 residues: Jupiter microtubule associated homolog 2 (190 aa).

Met-1 is modified (N-acetylmethionine). The disordered stretch occupies residues 1-190 (MFQVPDSEGG…PGGKSSISFY (190 aa)). Ser-30 carries the phosphoserine modification. The residue at position 35 (Thr-35) is a Phosphothreonine. Residues 35–44 (TPSSRPNRMA) show a composition bias toward polar residues. A phosphoserine mark is found at Ser-45, Ser-69, and Ser-97. The span at 110–129 (KPKDHVFLCEGEEPKSDLKA) shows a compositional bias: basic and acidic residues. A phosphoserine mark is found at Ser-132 and Ser-144. Residues 139–167 (PGEKGSARKAGPAKEQEPMPTVDSHEPRL) show a composition bias toward basic and acidic residues.

The protein belongs to the JUPITER family. Monomer. Dimer. Interacts with TPCN1. In terms of tissue distribution, expressed in liver, kidney, prostate, testis and uterus.

It is found in the cytoplasm. It localises to the nucleus. Functionally, nicotinic acid adenine dinucleotide phosphate (NAADP) binding protein required for NAADP-evoked intracellular calcium release. Confers NAADP-sensitivity to the two pore channels (TPCs) complex. Enables NAADP to activate Ca(2+) release from the endoplasmic reticulum through ryanodine receptors. In terms of biological role, (Microbial infection) Involved in the endolysosomal trafficking of human coronavirus SARS-CoV-2. This chain is Jupiter microtubule associated homolog 2, found in Homo sapiens (Human).